We begin with the raw amino-acid sequence, 900 residues long: Formin-like protein 5 (900 aa).

A helical; Signal-anchor transmembrane segment spans residues 15–32; it reads SRLVFWLILFSGLLVITL. Residues 136–209 are disordered; that stretch reads RNLATKPGSS…PVSPAKKKED (74 aa). The span at 160 to 173 shows a compositional bias: pro residues; that stretch reads PPRPPTRPKSPPPR. A helical membrane pass occupies residues 214 to 234; sequence IIIAVVVTAVSTFLLAALFFL. Disordered regions lie at residues 273–440 and 849–900; these read SVKG…DAPK and ARGR…SDSD. A compositionally biased stretch (polar residues) spans 281-304; it reads HQSFNIYSNQGKMSSFDGSNSDTS. The span at 307–316 shows a compositional bias: basic and acidic residues; sequence LEERLSHEGL. The segment covering 359 to 368 has biased composition (low complexity); the sequence is FLKVSSKKAS. Over residues 369–429 the composition is skewed to pro residues; it reads APPPPVPAPQ…GPKAPRPPSG (61 aa). Positions 433–865 constitute an FH2 domain; that stretch reads ALDDDAPKTK…MARKQGSTAS (433 aa). Over residues 860–876 the composition is skewed to polar residues; sequence QGSTASASSETPRQTPS.

Belongs to the formin-like family. Class-I subfamily. Expressed in the endosperm. Localizes to the cell plate, a plant-specific membranous component that is assembled at the plane of cell division.

The protein localises to the membrane. Functionally, might be involved in the organization and polarity of the actin cytoskeleton. Interacts with the barbed end of actin filaments and nucleates actin-filament polymerization in vitro. Seems to play a role in cytokinesis. In Arabidopsis thaliana (Mouse-ear cress), this protein is Formin-like protein 5 (FH5).